The chain runs to 55 residues: MAVPKKKTSKAKRDQRRAHWKRKATIEAQKALSLGKSVLTGRSSFVYPSPEDDEE.

Positions 1–23 are enriched in basic residues; it reads MAVPKKKTSKAKRDQRRAHWKRK. The tract at residues 1–26 is disordered; that stretch reads MAVPKKKTSKAKRDQRRAHWKRKATI.

It belongs to the bacterial ribosomal protein bL32 family.

The chain is Large ribosomal subunit protein bL32 from Picosynechococcus sp. (strain ATCC 27264 / PCC 7002 / PR-6) (Agmenellum quadruplicatum).